We begin with the raw amino-acid sequence, 297 residues long: Homoserine kinase (297 aa).

79–89 is a binding site for ATP; it reads PIARGLGSSGA.

The protein belongs to the GHMP kinase family. Homoserine kinase subfamily.

The protein resides in the cytoplasm. The enzyme catalyses L-homoserine + ATP = O-phospho-L-homoserine + ADP + H(+). Its pathway is amino-acid biosynthesis; L-threonine biosynthesis; L-threonine from L-aspartate: step 4/5. Functionally, catalyzes the ATP-dependent phosphorylation of L-homoserine to L-homoserine phosphate. This chain is Homoserine kinase, found in Pyrobaculum neutrophilum (strain DSM 2338 / JCM 9278 / NBRC 100436 / V24Sta) (Thermoproteus neutrophilus).